The sequence spans 420 residues: UDP-N-acetylglucosamine 1-carboxyvinyltransferase (420 aa).

Residue 23–24 (KN) coordinates phosphoenolpyruvate. Residue Arg92 coordinates UDP-N-acetyl-alpha-D-glucosamine. Residue Cys116 is the Proton donor of the active site. Position 116 is a 2-(S-cysteinyl)pyruvic acid O-phosphothioketal (Cys116). Residues 121 to 125 (RPVDL), 161 to 164 (KVSV), Asp306, and Ile328 contribute to the UDP-N-acetyl-alpha-D-glucosamine site.

It belongs to the EPSP synthase family. MurA subfamily.

Its subcellular location is the cytoplasm. It carries out the reaction phosphoenolpyruvate + UDP-N-acetyl-alpha-D-glucosamine = UDP-N-acetyl-3-O-(1-carboxyvinyl)-alpha-D-glucosamine + phosphate. The protein operates within cell wall biogenesis; peptidoglycan biosynthesis. Functionally, cell wall formation. Adds enolpyruvyl to UDP-N-acetylglucosamine. This chain is UDP-N-acetylglucosamine 1-carboxyvinyltransferase, found in Photobacterium profundum (strain SS9).